The primary structure comprises 217 residues: ATP-dependent Clp protease proteolytic subunit 3 (217 aa).

A compositionally biased stretch (low complexity) spans 1-13 (MSPFTAGPAPART). Positions 1 to 23 (MSPFTAGPAPARTPRAEEGDTPA) are disordered. Serine 108 (nucleophile) is an active-site residue. The active site involves histidine 133.

Belongs to the peptidase S14 family. In terms of assembly, fourteen ClpP subunits assemble into 2 heptameric rings which stack back to back to give a disk-like structure with a central cavity, resembling the structure of eukaryotic proteasomes.

It is found in the cytoplasm. It catalyses the reaction Hydrolysis of proteins to small peptides in the presence of ATP and magnesium. alpha-casein is the usual test substrate. In the absence of ATP, only oligopeptides shorter than five residues are hydrolyzed (such as succinyl-Leu-Tyr-|-NHMec, and Leu-Tyr-Leu-|-Tyr-Trp, in which cleavage of the -Tyr-|-Leu- and -Tyr-|-Trp bonds also occurs).. Its function is as follows. Cleaves peptides in various proteins in a process that requires ATP hydrolysis. Has a chymotrypsin-like activity. Plays a major role in the degradation of misfolded proteins. In Streptomyces coelicolor (strain ATCC BAA-471 / A3(2) / M145), this protein is ATP-dependent Clp protease proteolytic subunit 3.